The chain runs to 507 residues: Natural resistance-associated macrophage protein 1 (507 aa).

Positions 1–36 (MIRDKNPQRVNRPSYGSISSLPSPAPQPEPSRNTYL) are disordered. Topologically, residues 1 to 39 (MIRDKNPQRVNRPSYGSISSLPSPAPQPEPSRNTYLSEK) are cytoplasmic. Polar residues predominate over residues 8-22 (QRVNRPSYGSISSLP). The chain crosses the membrane as a helical span at residues 40–60 (IPIPSTEQLLWVLLWATVLGL). Topologically, residues 61–123 (LCQRLAARLG…ISFNLLSAGR (63 aa)) are extracellular. The chain crosses the membrane as a helical span at residues 124–144 (IPLWGGVLITIVDTFFFLFLD). Topologically, residues 145-152 (NYGLRKLE) are cytoplasmic. Residues 153–173 (AFFGFLVTIMALTFGYEYVVA) traverse the membrane as a helical segment. At 174 to 199 (RPSQGALLKGLFLPSCPGCGQPELLQ) the chain is on the extracellular side. A helical transmembrane segment spans residues 200-220 (AVGIVGAIIMPHNIYLHSALV). Topologically, residues 221 to 245 (KSREVDRTRRGDVREANMYFLTEAT) are cytoplasmic. Residues 246–266 (IALFVSFIINLFVMAVFGQAF) traverse the membrane as a helical segment. Residues 267 to 305 (YQQTNEEAFNICANSSLHNYAKIFPRDNNTVSVDIYQGG) lie on the Extracellular side of the membrane. Residues N280 and N294 are each glycosylated (N-linked (GlcNAc...) asparagine). The helical transmembrane segment at 306-326 (VILGCLFGPAALYIWAVGLLA) threads the bilayer. At 327-353 (AGQSSTMTGTYAGQFVMEGFLKLRWSR) the chain is on the cytoplasmic side. The helical transmembrane segment at 354 to 374 (FARVLLTRSCAILPTVLVAVF) threads the bilayer. The Extracellular segment spans residues 375 to 391 (RDLRDLSGLNDLLNVLQ). Residues 392–412 (SLLLPFAVLPILTFTSMPAVM) traverse the membrane as a helical segment. Residues 413 to 422 (QEFANGWLSK) lie on the Cytoplasmic side of the membrane. Residues 423–443 (VITSCIMALVCAINLYFVISY) form a helical membrane-spanning segment. Residues 444–451 (LPSLPHPA) lie on the Extracellular side of the membrane. Residues 452 to 472 (YFGLVALLAIGYLGLTAYLAW) traverse the membrane as a helical segment. The Cytoplasmic segment spans residues 473 to 507 (TCCIAHGAKFLTHSSHQRFLYGLPIEEQEGREGSG).

The protein belongs to the NRAMP family.

Its subcellular location is the late endosome membrane. It is found in the lysosome membrane. It catalyses the reaction Zn(2+)(in) + H(+)(out) = Zn(2+)(out) + H(+)(in). It carries out the reaction Fe(2+)(in) + H(+)(out) = Fe(2+)(out) + H(+)(in). The catalysed reaction is Mn(2+)(in) + H(+)(out) = Mn(2+)(out) + H(+)(in). Its function is as follows. Macrophage-specific antiporter that fluxes metal ions in either direction against a proton gradient. Localized to late endosomal lysosomal membranes, delivers bivalent cations from the cytosol into these acidic compartments where they may directly affect antimicrobial activity. Involved in iron metabolism and host natural resistance to infection with intracellular parasites. Pathogen resistance involves sequestration of Fe(2+) and Mn(2+), cofactors of both prokaryotic and eukaryotic catalases and superoxide dismutases, not only to protect the macrophage against its own generation of reactive oxygen species, but to deny the cations to the pathogen for synthesis of its protective enzymes. This is Natural resistance-associated macrophage protein 1 (Slc11a1) from Rattus norvegicus (Rat).